Reading from the N-terminus, the 135-residue chain is Transcription antitermination protein NusB (135 aa).

This sequence belongs to the NusB family.

In terms of biological role, involved in transcription antitermination. Required for transcription of ribosomal RNA (rRNA) genes. Binds specifically to the boxA antiterminator sequence of the ribosomal RNA (rrn) operons. The protein is Transcription antitermination protein NusB of Lacticaseibacillus paracasei (strain ATCC 334 / BCRC 17002 / CCUG 31169 / CIP 107868 / KCTC 3260 / NRRL B-441) (Lactobacillus paracasei).